The sequence spans 602 residues: Elongation factor 4 (602 aa).

Residues 2 to 184 form the tr-type G domain; the sequence is KHIRNFSIIA…AIVAKVPAPR (183 aa). Residues 14–19 and 131–134 each bind GTP; these read DHGKST and NKMD.

It belongs to the TRAFAC class translation factor GTPase superfamily. Classic translation factor GTPase family. LepA subfamily.

It localises to the cell inner membrane. It catalyses the reaction GTP + H2O = GDP + phosphate + H(+). In terms of biological role, required for accurate and efficient protein synthesis under certain stress conditions. May act as a fidelity factor of the translation reaction, by catalyzing a one-codon backward translocation of tRNAs on improperly translocated ribosomes. Back-translocation proceeds from a post-translocation (POST) complex to a pre-translocation (PRE) complex, thus giving elongation factor G a second chance to translocate the tRNAs correctly. Binds to ribosomes in a GTP-dependent manner. This is Elongation factor 4 from Verminephrobacter eiseniae (strain EF01-2).